The chain runs to 836 residues: Protein-glutamine gamma-glutamyltransferase K (836 aa).

A compositionally biased stretch (basic and acidic residues) spans 1–33 (MDGPRSDMGRSDVSRSDMSRSDMGRSDMGRSDV). Disordered regions lie at residues 1–68 (MDGP…SRGG) and 89–125 (DDWG…DGTI). Thr-46 is modified (phosphothreonine). Phosphoserine occurs at positions 48, 98, and 112. Residues 89–112 (DDWGREPSDSRDRGSSSRGGRPDS) show a composition bias toward basic and acidic residues. Active-site residues include Cys-397, His-456, and Asp-479. Residues Asn-519, Asp-521, Glu-568, and Glu-573 each coordinate Ca(2+). Ser-824 carries the phosphoserine modification.

This sequence belongs to the transglutaminase superfamily. Transglutaminase family. As to quaternary structure, interacts with PLAAT4. It depends on Ca(2+) as a cofactor. Palmitoylated. In terms of processing, the membrane anchorage region possesses a cluster of five cysteines within which fatty acid(s) may become thioester-linked. It is subject to phorbol ester-stimulated phosphorylation and is hypersensitive to proteolysis, which releases the enzyme in a soluble form. Post-translationally, tyrosine-phosphorylated.

Its subcellular location is the membrane. The catalysed reaction is L-glutaminyl-[protein] + L-lysyl-[protein] = [protein]-L-lysyl-N(6)-5-L-glutamyl-[protein] + NH4(+). With respect to regulation, inhibited by retinoic acid, but phorbol ester treatment activates it. Catalyzes the cross-linking of proteins and the conjugation of polyamines to proteins. Responsible for cross-linking epidermal proteins during formation of the stratum corneum. Involved in cell proliferation. This Oryctolagus cuniculus (Rabbit) protein is Protein-glutamine gamma-glutamyltransferase K (TGM1).